Reading from the N-terminus, the 461-residue chain is Cysteine--tRNA ligase (461 aa).

Cys-29 serves as a coordination point for Zn(2+). The short motif at 31 to 41 is the 'HIGH' region element; that stretch reads MTVYDFCHIGH. Zn(2+) is bound by residues Cys-210, His-235, and Glu-239. Positions 267–271 match the 'KMSKS' region motif; it reads KMSKS. Lys-270 contributes to the ATP binding site.

Belongs to the class-I aminoacyl-tRNA synthetase family. Monomer. Requires Zn(2+) as cofactor.

It localises to the cytoplasm. The catalysed reaction is tRNA(Cys) + L-cysteine + ATP = L-cysteinyl-tRNA(Cys) + AMP + diphosphate. This chain is Cysteine--tRNA ligase, found in Azotobacter vinelandii (strain DJ / ATCC BAA-1303).